Here is a 40-residue protein sequence, read N- to C-terminus: MADTTGRIPLWVIGTVAGIPVIGLIGIFFYGSYSGLGSSL.

The chain crosses the membrane as a helical span at residues 8–28; it reads IPLWVIGTVAGIPVIGLIGIF.

The protein belongs to the PsbJ family. As to quaternary structure, PSII is composed of 1 copy each of membrane proteins PsbA, PsbB, PsbC, PsbD, PsbE, PsbF, PsbH, PsbI, PsbJ, PsbK, PsbL, PsbM, PsbT, PsbX, PsbY, PsbZ, Psb30/Ycf12, at least 3 peripheral proteins of the oxygen-evolving complex and a large number of cofactors. It forms dimeric complexes.

It localises to the plastid. The protein resides in the chloroplast thylakoid membrane. One of the components of the core complex of photosystem II (PSII). PSII is a light-driven water:plastoquinone oxidoreductase that uses light energy to abstract electrons from H(2)O, generating O(2) and a proton gradient subsequently used for ATP formation. It consists of a core antenna complex that captures photons, and an electron transfer chain that converts photonic excitation into a charge separation. In Nasturtium officinale (Watercress), this protein is Photosystem II reaction center protein J.